Consider the following 638-residue polypeptide: Threonine--tRNA ligase (638 aa).

A TGS domain is found at 1–63 (MVMIQIELPD…TESGRLEIIT (63 aa)). The tract at residues 245 to 536 (DHRRIGRELD…LIEHYAGNFP (292 aa)) is catalytic. 3 residues coordinate Zn(2+): Cys-337, His-388, and His-513.

This sequence belongs to the class-II aminoacyl-tRNA synthetase family. In terms of assembly, homodimer. Requires Zn(2+) as cofactor.

It localises to the cytoplasm. The enzyme catalyses tRNA(Thr) + L-threonine + ATP = L-threonyl-tRNA(Thr) + AMP + diphosphate + H(+). In terms of biological role, catalyzes the attachment of threonine to tRNA(Thr) in a two-step reaction: L-threonine is first activated by ATP to form Thr-AMP and then transferred to the acceptor end of tRNA(Thr). Also edits incorrectly charged L-seryl-tRNA(Thr). The chain is Threonine--tRNA ligase from Syntrophotalea carbinolica (strain DSM 2380 / NBRC 103641 / GraBd1) (Pelobacter carbinolicus).